A 400-amino-acid polypeptide reads, in one-letter code: D(3) dopamine receptor (400 aa).

Over 1–32 (MASLSQLSGHLNYTCGAENSTGASQARPHAYY) the chain is Extracellular. Residues asparagine 12 and asparagine 19 are each glycosylated (N-linked (GlcNAc...) asparagine). A helical transmembrane segment spans residues 33–55 (ALSYCALILAIVFGNGLVCMAVL). The Cytoplasmic segment spans residues 56–65 (KERALQTTTN). A helical membrane pass occupies residues 66 to 88 (YLVVSLAVADLLVATLVMPWVVY). Over 89–104 (LEVTGGVWNFSRICCD) the chain is Extracellular. Residue asparagine 97 is glycosylated (N-linked (GlcNAc...) asparagine). Cysteine 103 and cysteine 181 form a disulfide bridge. Residues 105-126 (VFVTLDVMMCTASILNLCAISI) form a helical membrane-spanning segment. An eticlopride-binding site is contributed by aspartate 110. The Cytoplasmic segment spans residues 127–149 (DRYTAVVMPVHYQHGTGQSSCRR). A helical membrane pass occupies residues 150 to 170 (VALMITAVWVLAFAVSCPLLF). At 171–187 (GFNTTGDPTVCSISNPD) the chain is on the extracellular side. An N-linked (GlcNAc...) asparagine glycan is attached at asparagine 173. Residues 188-209 (FVIYSSVVSFYLPFGVTVLVYA) traverse the membrane as a helical segment. Residues 210–329 (RIYVVLKQRR…VPLREKKATQ (120 aa)) are Cytoplasmic-facing. A helical membrane pass occupies residues 330-351 (MVAIVLGAFIVCWLPFFLTHVL). Eticlopride contacts are provided by phenylalanine 345 and histidine 349. Residues 352–366 (NTHCQTCHVSPELYS) are Extracellular-facing. Cysteines 355 and 358 form a disulfide. A helical transmembrane segment spans residues 367–386 (ATTWLGYVNSALNPVIYTTF). Over 387-400 (NIEFRKAFLKILSC) the chain is Cytoplasmic.

Belongs to the G-protein coupled receptor 1 family. In terms of assembly, interacts with CLIC6. Interacts with GRK4. Interacts with PALM. Interacts with FLNA (via filamin repeat 21); increases PKA-mediated phosphorylation of FLNA. In terms of processing, phosphorylated by GRK4 (GRK4-alpha and GRK4-gamma). Post-translationally, palmitoylated. Brain.

Its subcellular location is the cell membrane. Its function is as follows. Dopamine receptor whose activity is mediated by G proteins which inhibit adenylyl cyclase. Promotes cell proliferation. This chain is D(3) dopamine receptor, found in Homo sapiens (Human).